Here is a 341-residue protein sequence, read N- to C-terminus: Putative MAGE domain-containing protein MAGEA13P (341 aa).

2 disordered regions span residues 1 to 21 and 78 to 101; these read MPHS…APKE and KATP…GASQ. Residues 87-97 are compositionally biased toward basic and acidic residues; it reads ESSRSQEKKDP. An MAGE domain is found at 105 to 304; that stretch reads LEKKVDELVK…SSFPLLYEEA (200 aa).

The protein is Putative MAGE domain-containing protein MAGEA13P (MAGEA13P) of Homo sapiens (Human).